The following is a 122-amino-acid chain: MKKYNKSIGFYGEDLSAKFLKKEGYSILEKNFNCSSGEIDIIAIKDEIISFIEVKSRFSNSFGNPKESVTCSKQGRIINAAKYYLHVKKLYNYYIRFDVIEVNFHIDSSKYELNFLKDAFRV.

This sequence belongs to the UPF0102 family.

The chain is UPF0102 protein CPF_1959 from Clostridium perfringens (strain ATCC 13124 / DSM 756 / JCM 1290 / NCIMB 6125 / NCTC 8237 / Type A).